Consider the following 354-residue polypeptide: Pyrimidine monooxygenase RutA (354 aa).

FMN-binding positions include 49–50, N115, E124, 140–141, and S189; these read IK and RY.

The protein belongs to the NtaA/SnaA/DszA monooxygenase family. RutA subfamily.

The catalysed reaction is uracil + FMNH2 + NADH + O2 = (Z)-3-ureidoacrylate + FMN + NAD(+) + H2O + H(+). The enzyme catalyses thymine + FMNH2 + NADH + O2 = (Z)-2-methylureidoacrylate + FMN + NAD(+) + H2O + H(+). Functionally, catalyzes the pyrimidine ring opening between N-3 and C-4 by an unusual flavin hydroperoxide-catalyzed mechanism, adding oxygen atoms in the process to yield ureidoacrylate peracid, that immediately reacts with FMN forming ureidoacrylate and FMN-N(5)-oxide. The FMN-N(5)-oxide reacts spontaneously with NADH to produce FMN. Requires the flavin reductase RutF to regenerate FMN in vivo. The chain is Pyrimidine monooxygenase RutA from Caulobacter sp. (strain K31).